Here is a 324-residue protein sequence, read N- to C-terminus: Ribose 1,5-bisphosphate isomerase (324 aa).

Substrate contacts are provided by residues 22–25 and arginine 65; that span reads RGAG. Cysteine 135 (proton acceptor) is an active-site residue. 137–139 provides a ligand contact to substrate; that stretch reads SKA. Aspartate 204 serves as the catalytic Proton donor. Residues 214-215 and lysine 240 each bind substrate; that span reads NK.

Belongs to the eIF-2B alpha/beta/delta subunits family. R15P isomerase subfamily.

The enzyme catalyses alpha-D-ribose 1,5-bisphosphate = D-ribulose 1,5-bisphosphate. In terms of biological role, catalyzes the isomerization of ribose 1,5-bisphosphate (R15P) to ribulose 1,5-bisphosphate (RuBP), the CO(2) acceptor and substrate for RubisCO. Functions in an archaeal AMP degradation pathway, together with AMP phosphorylase and RubisCO. The polypeptide is Ribose 1,5-bisphosphate isomerase (Pyrococcus horikoshii (strain ATCC 700860 / DSM 12428 / JCM 9974 / NBRC 100139 / OT-3)).